We begin with the raw amino-acid sequence, 835 residues long: Protein translocase subunit SecA (835 aa).

Residues Gln-85, 103–107, and Asp-492 each bind ATP; that span reads GEGKT. Zn(2+) is bound by residues Cys-819, Cys-821, Cys-830, and Cys-831.

Belongs to the SecA family. As to quaternary structure, monomer and homodimer. Part of the essential Sec protein translocation apparatus which comprises SecA, SecYEG and auxiliary proteins SecDF. Other proteins may also be involved. Requires Zn(2+) as cofactor.

The protein localises to the cell membrane. The protein resides in the cytoplasm. The enzyme catalyses ATP + H2O + cellular proteinSide 1 = ADP + phosphate + cellular proteinSide 2.. Its function is as follows. Part of the Sec protein translocase complex. Interacts with the SecYEG preprotein conducting channel. Has a central role in coupling the hydrolysis of ATP to the transfer of proteins into and across the cell membrane, serving as an ATP-driven molecular motor driving the stepwise translocation of polypeptide chains across the membrane. The protein is Protein translocase subunit SecA of Clostridium botulinum (strain Loch Maree / Type A3).